Consider the following 446-residue polypeptide: MTVVAIVGRPNVGKSTLFNRISKDNSALVDDLPGVTRDRNYARVSWNDKPFVIIDTAGFVGQDTSAFEELTREQILLALDEADILLFVADAKTGLHPGDAELADLLRRSSKPVFYAVNKIDGSEQRRHAAEFFELGLDRIYPISAAHGFGISELMDDLCAAIPEAPAQTAEEEESGGAIRVSILGRPNVGKSTLVNHLLGAPRVIVSPVPGTTRDAVDSHIVKAGQEYVLIDTAGIRRKGRTREKLEKISIIKALQSVERSHVVVLLLDAVEGVTDQDLHIAGYIKERSRACIVGINKWDAADKDPKRTKRFMDDLHDRFRFLTYAPVLTFSALTGRNVARLLPTVKEVFRQYNQRVTTGIVNRALEETLARHEPPQAGNRRRLKFYYATQTAVRPPTFVLFCNYPQAIHFSYERYLTNRFREAFGLDKTPIRLIFRPRQRTGGTS.

2 consecutive EngA-type G domains span residues 2 to 166 and 179 to 354; these read TVVA…PEAP and IRVS…RQYN. GTP is bound by residues 8-15, 55-59, 118-121, 185-192, 232-236, and 297-300; these read GRPNVGKS, DTAGF, NKID, DTAGI, and NKWD. Residues 355 to 440 form the KH-like domain; that stretch reads QRVTTGIVNR…PIRLIFRPRQ (86 aa).

The protein belongs to the TRAFAC class TrmE-Era-EngA-EngB-Septin-like GTPase superfamily. EngA (Der) GTPase family. Associates with the 50S ribosomal subunit.

GTPase that plays an essential role in the late steps of ribosome biogenesis. The sequence is that of GTPase Der from Syntrophobacter fumaroxidans (strain DSM 10017 / MPOB).